The primary structure comprises 300 residues: Ribokinase (300 aa).

Substrate is bound by residues 11–13 (SMD), 39–43 (GKGAN), and glutamate 139. Residues asparagine 183 and 210–215 (TLGSEG) contribute to the ATP site. Aspartate 236 and threonine 238 together coordinate K(+). An ATP-binding site is contributed by 241-242 (GD). Residue aspartate 242 participates in substrate binding. Aspartate 242 acts as the Proton acceptor in catalysis. 3 residues coordinate K(+): serine 272, lysine 275, and glycine 277.

Belongs to the carbohydrate kinase PfkB family. Ribokinase subfamily. In terms of assembly, homodimer. Mg(2+) is required as a cofactor.

It localises to the cytoplasm. It catalyses the reaction D-ribose + ATP = D-ribose 5-phosphate + ADP + H(+). The protein operates within carbohydrate metabolism; D-ribose degradation; D-ribose 5-phosphate from beta-D-ribopyranose: step 2/2. Its activity is regulated as follows. Activated by a monovalent cation that binds near, but not in, the active site. The most likely occupant of the site in vivo is potassium. Ion binding induces a conformational change that may alter substrate affinity. Catalyzes the phosphorylation of ribose at O-5 in a reaction requiring ATP and magnesium. The resulting D-ribose-5-phosphate can then be used either for sythesis of nucleotides, histidine, and tryptophan, or as a component of the pentose phosphate pathway. The polypeptide is Ribokinase (Lactococcus lactis subsp. lactis (strain IL1403) (Streptococcus lactis)).